The chain runs to 376 residues: Respiration factor 1 (376 aa).

Disordered regions lie at residues 1 to 23, 88 to 107, 258 to 279, and 347 to 376; these read MKDL…DNRG, VNVT…NSTK, FKEK…TGSS, and GVNE…QHTN. A compositionally biased stretch (low complexity) spans 354-376; it reads NSSNLNNSNSGTPHNHNQNQHTN.

The protein localises to the cytoplasm. It localises to the nucleus. Its subcellular location is the mitochondrion. Its function is as follows. Mitochondrial and nuclear transcriptional activator required for respiratory growth. This is Respiration factor 1 (RSF1) from Saccharomyces cerevisiae (strain YJM789) (Baker's yeast).